Reading from the N-terminus, the 211-residue chain is Holliday junction branch migration complex subunit RuvA (211 aa).

Residues 1 to 63 (MIASLRGTVI…EDSQTLYVFK (63 aa)) form a domain I region. The interval 64 to 142 (DADEKRAFAT…DLGEIADTGA (79 aa)) is domain II. The flexible linker stretch occupies residues 143–157 (VGAAGAVGDGGDGQA). Residues 158–211 (VAPDVREQVLEALVGLGFTESKAGTTIEAVLSQWSAPQAPDASGLLRASLAAIK) form a domain III region.

It belongs to the RuvA family. As to quaternary structure, homotetramer. Forms an RuvA(8)-RuvB(12)-Holliday junction (HJ) complex. HJ DNA is sandwiched between 2 RuvA tetramers; dsDNA enters through RuvA and exits via RuvB. An RuvB hexamer assembles on each DNA strand where it exits the tetramer. Each RuvB hexamer is contacted by two RuvA subunits (via domain III) on 2 adjacent RuvB subunits; this complex drives branch migration. In the full resolvosome a probable DNA-RuvA(4)-RuvB(12)-RuvC(2) complex forms which resolves the HJ.

Its subcellular location is the cytoplasm. The RuvA-RuvB-RuvC complex processes Holliday junction (HJ) DNA during genetic recombination and DNA repair, while the RuvA-RuvB complex plays an important role in the rescue of blocked DNA replication forks via replication fork reversal (RFR). RuvA specifically binds to HJ cruciform DNA, conferring on it an open structure. The RuvB hexamer acts as an ATP-dependent pump, pulling dsDNA into and through the RuvAB complex. HJ branch migration allows RuvC to scan DNA until it finds its consensus sequence, where it cleaves and resolves the cruciform DNA. This is Holliday junction branch migration complex subunit RuvA from Corynebacterium jeikeium (strain K411).